Here is a 480-residue protein sequence, read N- to C-terminus: Aspartyl/glutamyl-tRNA(Asn/Gln) amidotransferase subunit B (480 aa).

This sequence belongs to the GatB/GatE family. GatB subfamily. As to quaternary structure, heterotrimer of A, B and C subunits.

It catalyses the reaction L-glutamyl-tRNA(Gln) + L-glutamine + ATP + H2O = L-glutaminyl-tRNA(Gln) + L-glutamate + ADP + phosphate + H(+). It carries out the reaction L-aspartyl-tRNA(Asn) + L-glutamine + ATP + H2O = L-asparaginyl-tRNA(Asn) + L-glutamate + ADP + phosphate + 2 H(+). In terms of biological role, allows the formation of correctly charged Asn-tRNA(Asn) or Gln-tRNA(Gln) through the transamidation of misacylated Asp-tRNA(Asn) or Glu-tRNA(Gln) in organisms which lack either or both of asparaginyl-tRNA or glutaminyl-tRNA synthetases. The reaction takes place in the presence of glutamine and ATP through an activated phospho-Asp-tRNA(Asn) or phospho-Glu-tRNA(Gln). This chain is Aspartyl/glutamyl-tRNA(Asn/Gln) amidotransferase subunit B, found in Streptococcus pneumoniae (strain CGSP14).